Reading from the N-terminus, the 344-residue chain is Peroxidase 36 (344 aa).

An N-terminal signal peptide occupies residues 1–28 (MNTKTVKSMAGIVLSQISLVALFPLCIC). Cystine bridges form between Cys-50–Cys-130, Cys-83–Cys-88, Cys-136–Cys-337, and Cys-215–Cys-247. His-81 (proton acceptor) is an active-site residue. Ca(2+) contacts are provided by Asp-82, Val-85, Gly-87, Asp-89, and Ser-91. Pro-178 lines the substrate pocket. Residue His-208 coordinates heme b. Thr-209 is a binding site for Ca(2+). Asn-224 carries an N-linked (GlcNAc...) asparagine glycan. Ca(2+) is bound by residues Asp-260, Thr-263, and Asp-268.

This sequence belongs to the peroxidase family. Classical plant (class III) peroxidase subfamily. Heme b serves as cofactor. Requires Ca(2+) as cofactor.

It localises to the secreted. The enzyme catalyses 2 a phenolic donor + H2O2 = 2 a phenolic radical donor + 2 H2O. Functionally, removal of H(2)O(2), oxidation of toxic reductants, biosynthesis and degradation of lignin, suberization, auxin catabolism, response to environmental stresses such as wounding, pathogen attack and oxidative stress. These functions might be dependent on each isozyme/isoform in each plant tissue. This is Peroxidase 36 (PER36) from Arabidopsis thaliana (Mouse-ear cress).